We begin with the raw amino-acid sequence, 129 residues long: DNA-directed RNA polymerase subunit omega (129 aa).

A disordered region spans residues 77 to 98 (VDEPESEVVPALSSAPQNPEAI).

This sequence belongs to the RNA polymerase subunit omega family. As to quaternary structure, the RNAP catalytic core consists of 2 alpha, 1 beta, 1 beta' and 1 omega subunit. When a sigma factor is associated with the core the holoenzyme is formed, which can initiate transcription.

It catalyses the reaction RNA(n) + a ribonucleoside 5'-triphosphate = RNA(n+1) + diphosphate. In terms of biological role, promotes RNA polymerase assembly. Latches the N- and C-terminal regions of the beta' subunit thereby facilitating its interaction with the beta and alpha subunits. The polypeptide is DNA-directed RNA polymerase subunit omega (Methylocella silvestris (strain DSM 15510 / CIP 108128 / LMG 27833 / NCIMB 13906 / BL2)).